A 92-amino-acid chain; its full sequence is uncharacterized protein (92 aa).

A disordered region spans residues 1 to 92 (MSDAAAPAQA…PSPSQQQVAA (92 aa)).

This is an uncharacterized protein from Caenorhabditis elegans.